Here is a 345-residue protein sequence, read N- to C-terminus: Biotin synthase (345 aa).

The Radical SAM core domain maps to 38–256; it reads GEVQVSTLLS…IAVARIMMPR (219 aa). The [4Fe-4S] cluster site is built by Cys53, Cys57, and Cys60. [2Fe-2S] cluster-binding residues include Cys97, Cys128, Cys188, and Arg260.

This sequence belongs to the radical SAM superfamily. Biotin synthase family. In terms of assembly, homodimer. Requires [4Fe-4S] cluster as cofactor. It depends on [2Fe-2S] cluster as a cofactor.

The catalysed reaction is (4R,5S)-dethiobiotin + (sulfur carrier)-SH + 2 reduced [2Fe-2S]-[ferredoxin] + 2 S-adenosyl-L-methionine = (sulfur carrier)-H + biotin + 2 5'-deoxyadenosine + 2 L-methionine + 2 oxidized [2Fe-2S]-[ferredoxin]. It participates in cofactor biosynthesis; biotin biosynthesis; biotin from 7,8-diaminononanoate: step 2/2. In terms of biological role, catalyzes the conversion of dethiobiotin (DTB) to biotin by the insertion of a sulfur atom into dethiobiotin via a radical-based mechanism. This chain is Biotin synthase, found in Sodalis glossinidius (strain morsitans).